Here is a 529-residue protein sequence, read N- to C-terminus: Peptide chain release factor 3 (529 aa).

In terms of domain architecture, tr-type G spans 11–279 (AKRRTFAIIS…GLVDWAPKPQ (269 aa)). GTP is bound by residues 20-27 (SHPDAGKT), 88-92 (DTPGH), and 142-145 (NKLD).

Belongs to the TRAFAC class translation factor GTPase superfamily. Classic translation factor GTPase family. PrfC subfamily.

The protein localises to the cytoplasm. Increases the formation of ribosomal termination complexes and stimulates activities of RF-1 and RF-2. It binds guanine nucleotides and has strong preference for UGA stop codons. It may interact directly with the ribosome. The stimulation of RF-1 and RF-2 is significantly reduced by GTP and GDP, but not by GMP. The chain is Peptide chain release factor 3 from Idiomarina loihiensis (strain ATCC BAA-735 / DSM 15497 / L2-TR).